Reading from the N-terminus, the 428-residue chain is Light-independent protochlorophyllide reductase subunit N (428 aa).

[4Fe-4S] cluster-binding residues include C30, C55, and C116.

This sequence belongs to the BchN/ChlN family. In terms of assembly, protochlorophyllide reductase is composed of three subunits; BchL, BchN and BchB. Forms a heterotetramer of two BchB and two BchN subunits. [4Fe-4S] cluster serves as cofactor.

The enzyme catalyses chlorophyllide a + oxidized 2[4Fe-4S]-[ferredoxin] + 2 ADP + 2 phosphate = protochlorophyllide a + reduced 2[4Fe-4S]-[ferredoxin] + 2 ATP + 2 H2O. The protein operates within porphyrin-containing compound metabolism; bacteriochlorophyll biosynthesis (light-independent). In terms of biological role, component of the dark-operative protochlorophyllide reductase (DPOR) that uses Mg-ATP and reduced ferredoxin to reduce ring D of protochlorophyllide (Pchlide) to form chlorophyllide a (Chlide). This reaction is light-independent. The NB-protein (BchN-BchB) is the catalytic component of the complex. This Bradyrhizobium sp. (strain BTAi1 / ATCC BAA-1182) protein is Light-independent protochlorophyllide reductase subunit N.